We begin with the raw amino-acid sequence, 446 residues long: uncharacterized protein (446 aa).

The next 4 helical transmembrane spans lie at 69–89 (FWLW…VTYL), 98–118 (FFLV…VWLA), 169–189 (HSLW…LLLV), and 247–267 (GLLV…AWVV).

It localises to the membrane. This is an uncharacterized protein from Neisseria meningitidis serogroup B (strain ATCC BAA-335 / MC58).